Reading from the N-terminus, the 290-residue chain is Acetyl-coenzyme A carboxylase carboxyl transferase subunit beta (290 aa).

The CoA carboxyltransferase N-terminal domain maps to Leu29–Lys290. Cys33, Cys36, Cys52, and Cys55 together coordinate Zn(2+). The segment at Cys33–Cys55 adopts a C4-type zinc-finger fold.

This sequence belongs to the AccD/PCCB family. In terms of assembly, acetyl-CoA carboxylase is a heterohexamer composed of biotin carboxyl carrier protein (AccB), biotin carboxylase (AccC) and two subunits each of ACCase subunit alpha (AccA) and ACCase subunit beta (AccD). The cofactor is Zn(2+).

It is found in the cytoplasm. The catalysed reaction is N(6)-carboxybiotinyl-L-lysyl-[protein] + acetyl-CoA = N(6)-biotinyl-L-lysyl-[protein] + malonyl-CoA. Its pathway is lipid metabolism; malonyl-CoA biosynthesis; malonyl-CoA from acetyl-CoA: step 1/1. Its function is as follows. Component of the acetyl coenzyme A carboxylase (ACC) complex. Biotin carboxylase (BC) catalyzes the carboxylation of biotin on its carrier protein (BCCP) and then the CO(2) group is transferred by the transcarboxylase to acetyl-CoA to form malonyl-CoA. This Prochlorococcus marinus (strain MIT 9211) protein is Acetyl-coenzyme A carboxylase carboxyl transferase subunit beta.